The sequence spans 314 residues: Acetaldehyde dehydrogenase 3 (314 aa).

C132 functions as the Acyl-thioester intermediate in the catalytic mechanism. Residues 163–171 (SAGPGTRAN) and N291 each bind NAD(+).

The protein belongs to the acetaldehyde dehydrogenase family.

The catalysed reaction is acetaldehyde + NAD(+) + CoA = acetyl-CoA + NADH + H(+). This Dechloromonas aromatica (strain RCB) protein is Acetaldehyde dehydrogenase 3.